Here is a 129-residue protein sequence, read N- to C-terminus: Ropporin-1 (129 aa).

The 24-residue stretch at 11–34 folds into the RIIa domain; that stretch reads PELPELLKTQPPDLIQWAAEYFGA.

This sequence belongs to the ropporin family. Homodimer. Interacts with AKAP3. May interact with SPA17. Interacts with RHPN1. Interacts with FSCB; the interaction increases upon spermatozoa capacitation conditions. Interacts with CFAP61. In terms of processing, sumoylated, sumoylation decreases upon spermatozoa capacitation conditions.

It localises to the cell projection. The protein localises to the cilium. It is found in the flagellum. Important for male fertility. With ROPN1L, involved in fibrous sheath integrity and sperm motility, plays a role in PKA-dependent signaling processes required for spermatozoa capacitation. In Mesocricetus auratus (Golden hamster), this protein is Ropporin-1.